The primary structure comprises 443 residues: UPF0597 protein Dvul_2496 (443 aa).

Residues 156–178 (GMERAPEADGTLHGGASCEPSAS) are disordered.

The protein belongs to the UPF0597 family.

The protein is UPF0597 protein Dvul_2496 of Nitratidesulfovibrio vulgaris (strain DP4) (Desulfovibrio vulgaris).